Consider the following 364-residue polypeptide: MTKMNRKFSKLLKNPHIFFRDFLNKKYPIKNTELPFSESEEANLIEANQKLDKIIQKNTLQQTNIDVVFTWVDGSDPSWQAKYSQYAPNYQAKSALYATDIARFEDHNELYYSVHAVLKYMPWVRHIFIITDNQKPKWLDETRQEKITLIDHQDIIDKEYLPTFNSHVIEAFLHKIPNLSENFIYFNDDVFIARELQAEHFFQANGIASIFMSEKSLTQMRNRGTITPTLSASEYSIRLLNKYYNTNIDSPLVHTYIPLKKSMYELAWRRYEKEILGFLPNKFRTNNDLNFANFLIPWLMYFEGKAMPKIDICYYFNIRSPNALTQYKKLLNKKNIGEQLIHFAQMILIVKKVLTTIKINCFLF.

Belongs to the stealth family.

In terms of biological role, part of a capsular polysaccharide synthesis locus. The polypeptide is Capsular polysaccharide phosphotransferase cps1A (cps1A) (Actinobacillus pleuropneumoniae (Haemophilus pleuropneumoniae)).